Here is a 259-residue protein sequence, read N- to C-terminus: Electron transfer flavoprotein subunit beta (259 aa).

It belongs to the ETF beta-subunit/FixA family. In terms of assembly, heterodimer of an alpha and a beta subunit. Requires FAD as cofactor. The cofactor is AMP.

Its function is as follows. The electron transfer flavoprotein serves as a specific electron acceptor for other dehydrogenases. It transfers the electrons to the main respiratory chain via ETF-ubiquinone oxidoreductase (ETF dehydrogenase). The protein is Electron transfer flavoprotein subunit beta (etfB) of Clostridium acetobutylicum (strain ATCC 824 / DSM 792 / JCM 1419 / IAM 19013 / LMG 5710 / NBRC 13948 / NRRL B-527 / VKM B-1787 / 2291 / W).